We begin with the raw amino-acid sequence, 595 residues long: MQIIEIREPEQADFKQERQIAVGIDFGTTNSLIAIAANRQVKVIKSIDDKELIPTTIDFTSNNFTIGNNKGLRSIKRLFGKTLKEILNTPALFSLVKDYLDVNSSELKLNFANKQLRVPEIAAEIFIYLKNQAEEQLKTNLTKAVITVPAHFNDAARGEVMLAAKIAGFEVLRLIAEPTAAAYAYGLNKNQKGCYLVYDLGGGTFDVSILNIQEGIFQVIATNGDNMLGGNDIDVVITQYLCNKFDLPNSIDTLQLAKKAKETLTYKDSFNNDNVSINKQTLEQLILPLVERTINIAQECLEQAGNPNIDGVILVGGATRIPLIKDELYKAFKIDILSDIDPDKAVVWGAALQAENLIAPHTNSLLIDVAPLSLGMELYGGIVEKIIMHNTPIPISVVKEFTTYVDNQTGIQFHILQGEREMAADCRSLARFELKGLPPMKAGYIRAEVTFSIDADGILSVSAYEKISNTSHAIEVKPNHGIDKTEIDIMLENAYKNAKIDYTTRLLQEAVIEAEALIFSIERAIAELTTLSSESEISIINSLLDNIKEAVHARDWILINNSIKEFKSKIKKSIDTKFNIIINDLLKGKNINQIK.

This sequence belongs to the heat shock protein 70 family.

Its function is as follows. Chaperone involved in the maturation of iron-sulfur cluster-containing proteins. Has a low intrinsic ATPase activity which is markedly stimulated by HscB. In Rickettsia africae (strain ESF-5), this protein is Chaperone protein HscA homolog.